A 64-amino-acid polypeptide reads, in one-letter code: Metallothionein (64 aa).

This sequence belongs to the metallothionein superfamily. Type 4 family.

Metallothioneins have a high content of cysteine residues that bind various heavy metals. The polypeptide is Metallothionein (Sterechinus neumayeri (Antarctic sea urchin)).